A 948-amino-acid chain; its full sequence is Protocadherin alpha-2 (948 aa).

A signal peptide spans 1 to 22 (MASSIRRGLGAWTRLLSLLLLA). Residues 23–697 (AWEVGSGQLR…GSEATLVDVN (675 aa)) are Extracellular-facing. 6 consecutive Cadherin domains span residues 30–133 (QLRY…PPVF), 157–242 (ASDA…EPTF), 243–350 (AQSV…TPEV), 351–455 (SITS…APAF), 456–565 (AQPE…APAL), and 588–678 (GHVV…APKA). 4 N-linked (GlcNAc...) asparagine glycosylation sites follow: Asn257, Asn265, Asn362, and Asn548. The chain crosses the membrane as a helical span at residues 698-718 (VYLIIAICAVSSLLVLTVLLY). The Cytoplasmic portion of the chain corresponds to 719–948 (TALRCSVPAT…GNSTTDNSDQ (230 aa)). The stretch at 734 to 737 (PGKP) is one PXXP 1 repeat. The tract at residues 734 to 892 (PGKPTLVCSS…PDKFIIPGSP (159 aa)) is 5 X 4 AA repeats of P-X-X-P. 3 disordered regions span residues 755–801 (RQRV…RQPN), 829–854 (GPGG…EVSP), and 868–948 (KYGP…NSDQ). A compositionally biased stretch (basic and acidic residues) spans 783 to 795 (AEEKQLSESEYVG). PXXP repeat units lie at residues 797–800 (PRQP), 830–833 (PGGP), 871–874 (PGNP), and 889–892 (PGSP). The span at 907–921 (DKSDFITFGKKEETK) shows a compositional bias: basic and acidic residues.

It localises to the cell membrane. Its function is as follows. Potential calcium-dependent cell-adhesion protein. May be involved in the establishment and maintenance of specific neuronal connections in the brain. The protein is Protocadherin alpha-2 (PCDHA2) of Pan troglodytes (Chimpanzee).